The sequence spans 83 residues: Small ribosomal subunit protein uS17 (83 aa).

Belongs to the universal ribosomal protein uS17 family. Part of the 30S ribosomal subunit.

In terms of biological role, one of the primary rRNA binding proteins, it binds specifically to the 5'-end of 16S ribosomal RNA. In Zymomonas mobilis subsp. mobilis (strain ATCC 31821 / ZM4 / CP4), this protein is Small ribosomal subunit protein uS17.